The primary structure comprises 258 residues: uncharacterized protein (258 aa).

A signal peptide spans 1 to 20 (MKCFQKLYIFILILIVLMAG). Cysteine 21 carries N-palmitoyl cysteine lipidation. Cysteine 21 carries S-diacylglycerol cysteine lipidation.

Belongs to the staphylococcal tandem lipoprotein family.

The protein resides in the cell membrane. This is an uncharacterized protein from Staphylococcus aureus (strain bovine RF122 / ET3-1).